A 316-amino-acid chain; its full sequence is Phosphoglycerate mutase-like protein AT74 (316 aa).

H17 (tele-phosphohistidine intermediate) is an active-site residue. E106 serves as the catalytic Proton donor/acceptor. A disordered region spans residues 275–316 (KECETEATEDREEEEEEEGKRVNLLTSSEYSNEPELYNGQCC). Residues 279 to 291 (TEATEDREEEEEE) show a composition bias toward acidic residues.

The protein belongs to the phosphoglycerate mutase family. As to expression, expressed in roots, leaves, stems, flowers and siliques.

Its function is as follows. Phosphoglycerate mutase-like protein lacking PGM activity. May play a role in carbohydrates metabolism. In Arabidopsis thaliana (Mouse-ear cress), this protein is Phosphoglycerate mutase-like protein AT74.